The chain runs to 492 residues: NAD(P)H-quinone oxidoreductase subunit 2 A, chloroplastic (492 aa).

The next 13 helical transmembrane spans lie at 6–26 (LLLFDGSLIFPECILIFGLIL), 39–59 (ISWFYFISSTSLVMSITALLF), 81–101 (IFQFLILLCSTLCIPLSVEYI), 106–126 (MAITEFLLFILTTTLGGMFLC), 131–151 (LITIFVALECFSLCSYLLSGY), 165–185 (YLLMGGASSSILVHGFSWLYG), 209–229 (PGILIALLFITVGIGFKLSPA), 277–297 (WHLLLEILAILSMILGNLIAI), 305–325 (MLAYSSIGQIGYVIIGIIVGD), 336–356 (YMLFYISMNLGTFACIVSFGL), 377–397 (ALSLALCLLSLGGLPPLAGFF), 400–420 (LHLFWCGWQAGLYFLVSIGLL), and 464–484 (FSMIVCVIASTIPGISMNPII).

It belongs to the complex I subunit 2 family. NDH is composed of at least 16 different subunits, 5 of which are encoded in the nucleus.

The protein resides in the plastid. The protein localises to the chloroplast thylakoid membrane. It carries out the reaction a plastoquinone + NADH + (n+1) H(+)(in) = a plastoquinol + NAD(+) + n H(+)(out). It catalyses the reaction a plastoquinone + NADPH + (n+1) H(+)(in) = a plastoquinol + NADP(+) + n H(+)(out). NDH shuttles electrons from NAD(P)H:plastoquinone, via FMN and iron-sulfur (Fe-S) centers, to quinones in the photosynthetic chain and possibly in a chloroplast respiratory chain. The immediate electron acceptor for the enzyme in this species is believed to be plastoquinone. Couples the redox reaction to proton translocation, and thus conserves the redox energy in a proton gradient. This is NAD(P)H-quinone oxidoreductase subunit 2 A, chloroplastic from Phaseolus vulgaris (Kidney bean).